The following is a 59-amino-acid chain: Cytochrome c oxidase subunit 9, mitochondrial (59 aa).

At 2-8 (TIAPITG) the chain is on the mitochondrial matrix side. A helical membrane pass occupies residues 9–44 (TIKRRVIMDIVLGFSLGGVMASYWWWGFHMDKINKR). Residues 45 to 56 (EKFYAELAERKK) are Mitochondrial intermembrane-facing. A propeptide spans 57 to 59 (QEN) (removed in mature form).

The protein belongs to the fungal cytochrome c oxidase subunit 7a family. As to quaternary structure, component of the cytochrome c oxidase (complex IV, CIV), a multisubunit enzyme composed of 12 subunits. The complex is composed of a catalytic core of 3 subunits COX1, COX2 and COX3, encoded in the mitochondrial DNA, and 9 supernumerary subunits COX4, COX5A (or COX5B), COX6, COX7, COX8, COX9, COX12, COX13 and COX26, which are encoded in the nuclear genome. The complex exists as a monomer or a dimer and forms supercomplexes (SCs) in the inner mitochondrial membrane with a dimer of ubiquinol-cytochrome c oxidoreductase (cytochrome b-c1 complex, complex III, CIII), resulting in 2 different assemblies (supercomplexes III(2)IV and III(2)IV(2)).

It localises to the mitochondrion inner membrane. It functions in the pathway energy metabolism; oxidative phosphorylation. Its function is as follows. Component of the cytochrome c oxidase, the last enzyme in the mitochondrial electron transport chain which drives oxidative phosphorylation. The respiratory chain contains 3 multisubunit complexes succinate dehydrogenase (complex II, CII), ubiquinol-cytochrome c oxidoreductase (cytochrome b-c1 complex, complex III, CIII) and cytochrome c oxidase (complex IV, CIV), that cooperate to transfer electrons derived from NADH and succinate to molecular oxygen, creating an electrochemical gradient over the inner membrane that drives transmembrane transport and the ATP synthase. Cytochrome c oxidase is the component of the respiratory chain that catalyzes the reduction of oxygen to water. Electrons originating from reduced cytochrome c in the intermembrane space (IMS) are transferred via the dinuclear copper A center (CU(A)) of COX2 and heme A of COX1 to the active site in COX1, a binuclear center (BNC) formed by heme A3 and copper B (CU(B)). The BNC reduces molecular oxygen to 2 water molecules using 4 electrons from cytochrome c in the IMS and 4 protons from the mitochondrial matrix. In Saccharomyces cerevisiae (strain ATCC 204508 / S288c) (Baker's yeast), this protein is Cytochrome c oxidase subunit 9, mitochondrial (COX9).